A 469-amino-acid polypeptide reads, in one-letter code: Glutamate--tRNA ligase 1 (469 aa).

A 'HIGH' region motif is present at residues 11 to 21 (PSPTGHLHLGG). A 'KMSKS' region motif is present at residues 238–242 (KLSKR). Lysine 241 is an ATP binding site.

Belongs to the class-I aminoacyl-tRNA synthetase family. Glutamate--tRNA ligase type 1 subfamily. Monomer.

Its subcellular location is the cytoplasm. The enzyme catalyses tRNA(Glu) + L-glutamate + ATP = L-glutamyl-tRNA(Glu) + AMP + diphosphate. In terms of biological role, catalyzes the attachment of glutamate to tRNA(Glu) in a two-step reaction: glutamate is first activated by ATP to form Glu-AMP and then transferred to the acceptor end of tRNA(Glu). This is Glutamate--tRNA ligase 1 from Ehrlichia canis (strain Jake).